A 143-amino-acid polypeptide reads, in one-letter code: Photosystem II extrinsic protein U (143 aa).

The signal sequence occupies residues 1–29; the sequence is MKRLVGVLMILGLMLTSWGLLGSPQTAIA. Residues 30–44 constitute a propeptide that is removed on maturation; the sequence is ASLSPLSFNPSPVLA.

The protein belongs to the PsbU family. In terms of assembly, PSII is composed of 1 copy each of membrane proteins PsbA, PsbB, PsbC, PsbD, PsbE, PsbF, PsbH, PsbI, PsbJ, PsbK, PsbL, PsbM, PsbT, PsbX, PsbY, PsbZ, Psb30/Ycf12, peripheral proteins PsbO, CyanoQ (PsbQ), PsbU, PsbV and a large number of cofactors. It forms dimeric complexes.

The protein resides in the cellular thylakoid membrane. Its function is as follows. One of the extrinsic, lumenal subunits of photosystem II (PSII). PSII is a light-driven water plastoquinone oxidoreductase, using light energy to abstract electrons from H(2)O, generating a proton gradient subsequently used for ATP formation. The extrinsic proteins stabilize the structure of photosystem II oxygen-evolving complex (OEC), the ion environment of oxygen evolution and protect the OEC against heat-induced inactivation. This Leptolyngbya laminosa (Phormidium laminosum) protein is Photosystem II extrinsic protein U.